A 533-amino-acid polypeptide reads, in one-letter code: DNA-directed RNA polymerase III subunit RPC3 (533 aa).

The interval 161–183 (PLVPDTDSSDPGPPPPAPNLVIN) is disordered. Ser-194 carries the post-translational modification Phosphoserine. The tract at residues 197–228 (GKGKRRRSSDEDAAGEPKAKKPRCTDNEEPTP) is disordered. Residues 211–222 (GEPKAKKPRCTD) show a composition bias toward basic and acidic residues.

It belongs to the eukaryotic RPC3/POLR3C RNA polymerase subunit family. As to quaternary structure, component of the RNA polymerase III complex consisting of 17 subunits: a ten-subunit horseshoe-shaped catalytic core composed of POLR3A/RPC1, POLR3B/RPC2, POLR1C/RPAC1, POLR1D/RPAC2, POLR3K/RPC10, POLR2E/RPABC1, POLR2F/RPABC2, POLR2H/RPABC3, POLR2K/RPABC4 and POLR2L/RPABC5; a mobile stalk composed of two subunits POLR3H/RPC8 and CRCP/RPC9, protruding from the core and functioning primarily in transcription initiation; and additional subunits homologous to general transcription factors of the RNA polymerase II machinery, POLR3C/RPC3-POLR3F/RPC6-POLR3G/RPC7 heterotrimer required for transcription initiation and POLR3D/RPC4-POLR3E/RPC5 heterodimer involved in both transcription initiation and termination. Directly interacts with POLR3G/RPC7 and POLR3GL. Directly interacts with POLR3F/RPC6. Interacts with GTF3C4. As part of the RNA polymerase III complex, interacts with PKP2.

Its subcellular location is the nucleus. DNA-dependent RNA polymerase catalyzes the transcription of DNA into RNA using the four ribonucleoside triphosphates as substrates. Specific peripheric component of RNA polymerase III (Pol III) which synthesizes small non-coding RNAs including 5S rRNA, snRNAs, tRNAs and miRNAs from at least 500 distinct genomic loci. Part of POLR3C/RPC3-POLR3F/RPC6-POLR3G/RPC7 heterotrimer, coordinates the dynamics of Pol III stalk and clamp modules during the transition from apo to elongation state. Pol III plays a key role in sensing and limiting infection by intracellular bacteria and DNA viruses. Acts as a nuclear and cytosolic DNA sensor involved in innate immune response. Can sense non-self dsDNA that serves as template for transcription into dsRNA. The non-self RNA polymerase III transcripts, such as Epstein-Barr virus-encoded RNAs (EBERs) induce type I interferon and NF-kappa-B through the RIG-I pathway. Preferentially binds single-stranded DNA (ssDNA) in a sequence-independent manner. In Rattus norvegicus (Rat), this protein is DNA-directed RNA polymerase III subunit RPC3.